The chain runs to 20 residues: Dahlein-5.3 (20 aa).

Expressed by the skin dorsal glands.

The protein resides in the secreted. Has no antimicrobial activity. Strongly inhibits the formation of NO by neuronal nitric oxide synthase at micromolar concentrations. In Ranoidea dahlii (Dahl's aquatic frog), this protein is Dahlein-5.3.